Here is a 368-residue protein sequence, read N- to C-terminus: P2X receptor C (368 aa).

The Cytoplasmic portion of the chain corresponds to 1–24 (MLDWDSILAYNTIKVVRIRDRRLG). A helical transmembrane segment spans residues 25-45 (ILHLIFMIAIISYVVIYSAII). The Lumenal segment spans residues 46–368 (KKGYLSIEEP…DKLYHNIEAL (323 aa)). A pore-forming motif region spans residues 282–295 (RHAIRLIFIQTGVI).

This sequence belongs to the P2X receptor family.

The protein localises to the contractile vacuole membrane. P2X receptors are ligand-gated ion channels that play a role in intracellular calcium signaling. ATP does not evoke inward currents in p2xC. Not essential for osmoregulation. In Dictyostelium discoideum (Social amoeba), this protein is P2X receptor C (p2xC).